Reading from the N-terminus, the 898-residue chain is Fasciclin-2 (898 aa).

The signal sequence occupies residues methionine 1–alanine 22. The Extracellular portion of the chain corresponds to glutamine 23 to serine 764. Ig-like C2-type domains are found at residues proline 31–serine 124, proline 134–arginine 219, proline 226–threonine 316, proline 321–methionine 423, and proline 428–arginine 525. N-linked (GlcNAc...) asparagine glycosylation is found at asparagine 35, asparagine 51, asparagine 149, asparagine 192, asparagine 297, and asparagine 328. Cysteine 48 and cysteine 113 are joined by a disulfide. 2 cysteine pairs are disulfide-bonded: cysteine 156–cysteine 203 and cysteine 248–cysteine 300. Cysteine 343 and cysteine 407 are joined by a disulfide. N-linked (GlcNAc...) asparagine glycans are attached at residues asparagine 447, asparagine 457, and asparagine 580. A disulfide bridge connects residues cysteine 450 and cysteine 509. Fibronectin type-III domains lie at alanine 532–isoleucine 626 and glycine 644–proline 745. Residues alanine 765–valine 782 traverse the membrane as a helical segment. Topologically, residues aspartate 783–valine 898 are cytoplasmic.

It localises to the membrane. Neuronal recognition molecule. Involved in a pathway recognition for axons during the development of nerve fascicles. The chain is Fasciclin-2 (FAS2) from Schistocerca americana (American grasshopper).